The primary structure comprises 422 residues: S-adenosylmethionine synthase (422 aa).

H16 contacts ATP. Residue D18 coordinates Mg(2+). E44 lines the K(+) pocket. E57 and Q100 together coordinate L-methionine. The interval 100–110 (QSPDISQGVSA) is flexible loop. ATP contacts are provided by residues 175-177 (DGK), 251-252 (KF), D260, 266-267 (RK), A283, and K287. Position 260 (D260) interacts with L-methionine. Residue K291 participates in L-methionine binding.

The protein belongs to the AdoMet synthase family. Homotetramer; dimer of dimers. Mg(2+) serves as cofactor. It depends on K(+) as a cofactor.

The protein localises to the cytoplasm. It catalyses the reaction L-methionine + ATP + H2O = S-adenosyl-L-methionine + phosphate + diphosphate. It participates in amino-acid biosynthesis; S-adenosyl-L-methionine biosynthesis; S-adenosyl-L-methionine from L-methionine: step 1/1. Its function is as follows. Catalyzes the formation of S-adenosylmethionine (AdoMet) from methionine and ATP. The overall synthetic reaction is composed of two sequential steps, AdoMet formation and the subsequent tripolyphosphate hydrolysis which occurs prior to release of AdoMet from the enzyme. The protein is S-adenosylmethionine synthase of Rippkaea orientalis (strain PCC 8801 / RF-1) (Cyanothece sp. (strain PCC 8801)).